We begin with the raw amino-acid sequence, 604 residues long: Elongation factor 4 (604 aa).

The tr-type G domain occupies 7–189; that stretch reads SKIRNFCIIA…SIVHLVPPPS (183 aa). GTP-binding positions include 19-24 and 136-139; these read DHGKST and NKID.

Belongs to the TRAFAC class translation factor GTPase superfamily. Classic translation factor GTPase family. LepA subfamily.

Its subcellular location is the cell inner membrane. It catalyses the reaction GTP + H2O = GDP + phosphate + H(+). In terms of biological role, required for accurate and efficient protein synthesis under certain stress conditions. May act as a fidelity factor of the translation reaction, by catalyzing a one-codon backward translocation of tRNAs on improperly translocated ribosomes. Back-translocation proceeds from a post-translocation (POST) complex to a pre-translocation (PRE) complex, thus giving elongation factor G a second chance to translocate the tRNAs correctly. Binds to ribosomes in a GTP-dependent manner. This is Elongation factor 4 from Synechococcus sp. (strain ATCC 27144 / PCC 6301 / SAUG 1402/1) (Anacystis nidulans).